Here is a 141-residue protein sequence, read N- to C-terminus: uncharacterized protein (141 aa).

This is an uncharacterized protein from Clostridium pasteurianum.